We begin with the raw amino-acid sequence, 86 residues long: Superoxide dismutase [Cu-Zn] (86 aa).

Residues 1 to 26 (AKEKGGKLTAGLAAGGHWNPNKAPHH) form a disordered region. A compositionally biased stretch (low complexity) spans 7-16 (KLTAGLAAGG). His17 is a Cu cation binding site. Zn(2+) contacts are provided by His17, His26, His35, and Asp38. Residue His73 coordinates Cu cation.

The protein belongs to the Cu-Zn superoxide dismutase family. In terms of assembly, homodimer. Cu cation serves as cofactor. The cofactor is Zn(2+).

Its subcellular location is the periplasm. It carries out the reaction 2 superoxide + 2 H(+) = H2O2 + O2. Destroys radicals which are normally produced within the cells and which are toxic to biological systems. This is Superoxide dismutase [Cu-Zn] (sodC) from Mannheimia haemolytica (Pasteurella haemolytica).